Consider the following 538-residue polypeptide: Efflux pump radE (538 aa).

Basic and acidic residues-rich tracts occupy residues 1–12 (MATSRDFGREPP), 20–35 (EAGHTLHDGCQHVSEH), and 65–74 (DPKEEERDPN). Disordered regions lie at residues 1–35 (MATSRDFGREPPRQQQDSDEAGHTLHDGCQHVSEH) and 65–90 (DPKEEERDPNIVDWDGPDDPANPQNW). The next 12 helical transmembrane spans lie at 100–120 (AVLSIITFMVPLASSMFAPGI), 134–154 (LATFVVSVYILGLAAGPLVLA), 163–183 (VVIYHVGNVLFIIFTVACALS), 194–214 (FLCGLVGAGPIAIGGGTIADL), 225–245 (SVWSLGPLLGPSVGPVAGGFL), 253–273 (WIFWVLAITAGVITIAGLLVL), 327–347 (PICLVLSVYSAFVYAMIYFMI), 362–382 (EGIVGLVYIALGLGMLFGVVV), 409–429 (IPPTLLAGFLIPTGLFIYGWT), 436–456 (WAVPLLGALLAGMGICIINIS), 482–502 (IFGATFPLFALQMYETLGLGW), and 505–525 (SLLAFIAVAMFAIPPLLFYYG).

The protein belongs to the major facilitator superfamily.

It localises to the cell membrane. Functionally, efflux pump that might be required for efficient secretion of radicicol or other secondary metabolies produced by the radicicol gene cluster. This chain is Efflux pump radE, found in Floropilus chiversii (Chaetomium chiversii).